A 316-amino-acid polypeptide reads, in one-letter code: Probable cell division protein WhiA (316 aa).

Positions 276-309 form a DNA-binding region, H-T-H motif; the sequence is SLEELGKIAEPQITKDAIAGRIRRLLQLAEKTEK.

The protein belongs to the WhiA family.

Involved in cell division and chromosome segregation. This is Probable cell division protein WhiA from Bifidobacterium longum (strain NCC 2705).